The chain runs to 507 residues: Glycogen synthase (507 aa).

Lys15 contacts ADP-alpha-D-glucose.

The protein belongs to the glycosyltransferase 1 family. Bacterial/plant glycogen synthase subfamily.

The enzyme catalyses [(1-&gt;4)-alpha-D-glucosyl](n) + ADP-alpha-D-glucose = [(1-&gt;4)-alpha-D-glucosyl](n+1) + ADP + H(+). Its pathway is glycan biosynthesis; glycogen biosynthesis. In terms of biological role, synthesizes alpha-1,4-glucan chains using ADP-glucose. This is Glycogen synthase from Rhodopirellula baltica (strain DSM 10527 / NCIMB 13988 / SH1).